The chain runs to 201 residues: 3-isopropylmalate dehydratase small subunit (201 aa).

Belongs to the LeuD family. LeuD type 1 subfamily. In terms of assembly, heterodimer of LeuC and LeuD.

It catalyses the reaction (2R,3S)-3-isopropylmalate = (2S)-2-isopropylmalate. It participates in amino-acid biosynthesis; L-leucine biosynthesis; L-leucine from 3-methyl-2-oxobutanoate: step 2/4. Catalyzes the isomerization between 2-isopropylmalate and 3-isopropylmalate, via the formation of 2-isopropylmaleate. This chain is 3-isopropylmalate dehydratase small subunit, found in Escherichia coli O9:H4 (strain HS).